Here is a 329-residue protein sequence, read N- to C-terminus: Vanillate O-demethylase oxygenase subunit (329 aa).

The Rieske domain occupies 1-84 (MICNERMVIY…AQERHGFIWV (84 aa)). The [2Fe-2S] cluster site is built by Cys24, His26, Cys43, and His46.

It belongs to the bacterial ring-hydroxylating dioxygenase alpha subunit family. As to quaternary structure, this demethylase system consists of two proteins: an oxygenase and an oxygenase reductase. The cofactor is [2Fe-2S] cluster. Fe cation serves as cofactor.

The enzyme catalyses vanillate + NADH + O2 + H(+) = 3,4-dihydroxybenzoate + formaldehyde + NAD(+) + H2O. It participates in xenobiotic degradation; vanillyl-alcohol degradation. This chain is Vanillate O-demethylase oxygenase subunit (vanA), found in Pseudomonas sp. (strain ATCC 19151).